The primary structure comprises 245 residues: Probable phosphatase YcdX (245 aa).

The Zn(2+) site is built by H7, H9, H15, H40, E73, H101, H131, D192, and H194.

Belongs to the PHP family. Homotrimer. Zn(2+) is required as a cofactor.

The chain is Probable phosphatase YcdX from Escherichia coli O127:H6 (strain E2348/69 / EPEC).